A 416-amino-acid chain; its full sequence is Gamma-glutamyl phosphate reductase (416 aa).

The protein belongs to the gamma-glutamyl phosphate reductase family.

It localises to the cytoplasm. The catalysed reaction is L-glutamate 5-semialdehyde + phosphate + NADP(+) = L-glutamyl 5-phosphate + NADPH + H(+). The protein operates within amino-acid biosynthesis; L-proline biosynthesis; L-glutamate 5-semialdehyde from L-glutamate: step 2/2. Functionally, catalyzes the NADPH-dependent reduction of L-glutamate 5-phosphate into L-glutamate 5-semialdehyde and phosphate. The product spontaneously undergoes cyclization to form 1-pyrroline-5-carboxylate. In Salmonella schwarzengrund (strain CVM19633), this protein is Gamma-glutamyl phosphate reductase.